Reading from the N-terminus, the 227-residue chain is Uridylate kinase (227 aa).

Position 9–10 (9–10 (GS)) interacts with ATP. Glycine 44 lines the UMP pocket. Positions 45 and 49 each coordinate ATP. Residues aspartate 66 and 114-120 (TVPGHTT) contribute to the UMP site. Positions 140, 146, and 149 each coordinate ATP.

The protein belongs to the UMP kinase family. As to quaternary structure, homohexamer.

It is found in the cytoplasm. It carries out the reaction UMP + ATP = UDP + ADP. The protein operates within pyrimidine metabolism; CTP biosynthesis via de novo pathway; UDP from UMP (UMPK route): step 1/1. Its activity is regulated as follows. Inhibited by UTP. Functionally, catalyzes the reversible phosphorylation of UMP to UDP. The sequence is that of Uridylate kinase from Natronomonas pharaonis (strain ATCC 35678 / DSM 2160 / CIP 103997 / JCM 8858 / NBRC 14720 / NCIMB 2260 / Gabara) (Halobacterium pharaonis).